A 388-amino-acid chain; its full sequence is Formate-dependent phosphoribosylglycinamide formyltransferase (388 aa).

N(1)-(5-phospho-beta-D-ribosyl)glycinamide is bound by residues 11–12 and E71; that span reads EL. ATP-binding positions include R103, K144, 149 to 154, 184 to 187, and E192; these read SSGKGQ and EEFI. Positions 108 to 300 constitute an ATP-grasp domain; sequence DLAAKELGLK…EFELHLRAVL (193 aa). The Mg(2+) site is built by E257 and E270. Residues D277, K349, and 356–357 each bind N(1)-(5-phospho-beta-D-ribosyl)glycinamide; that span reads RR.

The protein belongs to the PurK/PurT family. Homodimer.

The enzyme catalyses N(1)-(5-phospho-beta-D-ribosyl)glycinamide + formate + ATP = N(2)-formyl-N(1)-(5-phospho-beta-D-ribosyl)glycinamide + ADP + phosphate + H(+). The protein operates within purine metabolism; IMP biosynthesis via de novo pathway; N(2)-formyl-N(1)-(5-phospho-D-ribosyl)glycinamide from N(1)-(5-phospho-D-ribosyl)glycinamide (formate route): step 1/1. Involved in the de novo purine biosynthesis. Catalyzes the transfer of formate to 5-phospho-ribosyl-glycinamide (GAR), producing 5-phospho-ribosyl-N-formylglycinamide (FGAR). Formate is provided by PurU via hydrolysis of 10-formyl-tetrahydrofolate. This Bacteroides fragilis (strain ATCC 25285 / DSM 2151 / CCUG 4856 / JCM 11019 / LMG 10263 / NCTC 9343 / Onslow / VPI 2553 / EN-2) protein is Formate-dependent phosphoribosylglycinamide formyltransferase.